The primary structure comprises 366 residues: Aminomethyltransferase (366 aa).

It belongs to the GcvT family. In terms of assembly, the glycine cleavage system is composed of four proteins: P, T, L and H.

It catalyses the reaction N(6)-[(R)-S(8)-aminomethyldihydrolipoyl]-L-lysyl-[protein] + (6S)-5,6,7,8-tetrahydrofolate = N(6)-[(R)-dihydrolipoyl]-L-lysyl-[protein] + (6R)-5,10-methylene-5,6,7,8-tetrahydrofolate + NH4(+). Functionally, the glycine cleavage system catalyzes the degradation of glycine. The polypeptide is Aminomethyltransferase (Bacillus mycoides (strain KBAB4) (Bacillus weihenstephanensis)).